A 90-amino-acid chain; its full sequence is Arminin 7722 (90 aa).

An N-terminal signal peptide occupies residues 1-18; sequence MRSASLILFVAIVALTYA. A propeptide spanning residues 19-59 is cleaved from the precursor; sequence RSYEDIKEEIRNEVENEILDDLEEENDELDDNAQEVSDPRA. Position 87 is a threonine amide (Thr87).

This sequence belongs to the arminin family. In terms of tissue distribution, expressed in entodermal epithelium along the body column.

It localises to the secreted. It is found in the target cell membrane. Antimicrobial peptide with a broad-spectrum antimicrobial activity. Keeps its antibacterial activity under a wide range of salt concentrations that mimic physiological conditions of human blood, which is surprising, since Hydra is an obligate freshwater animal with nearly no salt tolerance. Does not affect red blood cells. This chain is Arminin 7722, found in Hydra vulgaris (Hydra).